The chain runs to 333 residues: 1,5-anhydro-D-fructose reductase (333 aa).

NADP(+) is bound by residues 9 to 12 (ASTI), 33 to 34 (SS), arginine 38, 71 to 76 (TTNELH), 93 to 94 (EK), asparagine 120, 162 to 163 (WR), and tyrosine 283.

This sequence belongs to the Gfo/Idh/MocA family. In terms of assembly, monomer.

The enzyme catalyses 1,5-anhydro-D-mannitol + NADP(+) = 1,5-anhydro-D-fructose + NADPH + H(+). In terms of biological role, catalyzes the NADPH-specific reduction of 1,5-anhydro-D-fructose to 1,5-anhydro-D-mannitol. The polypeptide is 1,5-anhydro-D-fructose reductase (afr) (Rhizobium meliloti (strain 1021) (Ensifer meliloti)).